Consider the following 184-residue polypeptide: F(420)H(2) dehydrogenase subunit B (184 aa).

Residues 1 to 20 form a disordered region; the sequence is MGEVKETKTNNSKENPEEEV. [4Fe-4S] cluster contacts are provided by Cys-61, Cys-62, Cys-126, and Cys-156.

It belongs to the complex I 20 kDa subunit family. The FPO complex is composed of at least 13 different subunits. Requires FAD as cofactor. [4Fe-4S] cluster serves as cofactor.

The protein resides in the cell inner membrane. It carries out the reaction methanophenazine + reduced coenzyme F420-(gamma-L-Glu)(n) = dihydromethanophenazine + oxidized coenzyme F420-(gamma-L-Glu)(n) + H(+). Functionally, component of the F(420)H(2) dehydrogenase (FPO complex) which is part of the energy-conserving F(420)H(2):heterodisulfide oxidoreductase system. The membrane-bound electron transfer system of the complex plays an important role in the metabolism of methylotrophic methanogens when the organisms grow on methanol or methylamines. Catalyzes the oxidation of methanophenazine to dihydromethanophenazine. It shuttles electrons from F(420)H(2), via FAD and iron-sulfur (Fe-S) centers, to methanophenazine (an electron carrier in the membrane). It couples the redox reaction to proton translocation (for every two electrons transferred, two hydrogen ions are translocated across the cytoplasmic membrane), and thus conserves the redox energy in a proton gradient. It also catalyzes the oxidation of F(420)H(2) with quinones such as 2,3-dimethyl-1,4-naphthoquinone, 2-methyl-1,4-naphthoquinone and tetramethyl-p-benzoquinone. In Methanosarcina mazei (strain ATCC BAA-159 / DSM 3647 / Goe1 / Go1 / JCM 11833 / OCM 88) (Methanosarcina frisia), this protein is F(420)H(2) dehydrogenase subunit B (fpoB).